Here is a 436-residue protein sequence, read N- to C-terminus: 3-hydroxy-3-methylglutaryl-coenzyme A reductase (436 aa).

Active-site charge relay system residues include Glu-99, Lys-277, and Asp-293. His-390 (proton donor) is an active-site residue.

This sequence belongs to the HMG-CoA reductase family.

The catalysed reaction is (R)-mevalonate + 2 NADP(+) + CoA = (3S)-3-hydroxy-3-methylglutaryl-CoA + 2 NADPH + 2 H(+). Its pathway is metabolic intermediate biosynthesis; (R)-mevalonate biosynthesis; (R)-mevalonate from acetyl-CoA: step 3/3. Functionally, converts HMG-CoA to mevalonate. The chain is 3-hydroxy-3-methylglutaryl-coenzyme A reductase (hmgA) from Archaeoglobus fulgidus (strain ATCC 49558 / DSM 4304 / JCM 9628 / NBRC 100126 / VC-16).